The sequence spans 148 residues: D-aminoacyl-tRNA deacylase (148 aa).

A Gly-cisPro motif, important for rejection of L-amino acids motif is present at residues 137–138; that stretch reads GP.

Belongs to the DTD family. Homodimer.

Its subcellular location is the cytoplasm. The enzyme catalyses glycyl-tRNA(Ala) + H2O = tRNA(Ala) + glycine + H(+). It carries out the reaction a D-aminoacyl-tRNA + H2O = a tRNA + a D-alpha-amino acid + H(+). Its function is as follows. An aminoacyl-tRNA editing enzyme that deacylates mischarged D-aminoacyl-tRNAs. Also deacylates mischarged glycyl-tRNA(Ala), protecting cells against glycine mischarging by AlaRS. Acts via tRNA-based rather than protein-based catalysis; rejects L-amino acids rather than detecting D-amino acids in the active site. By recycling D-aminoacyl-tRNA to D-amino acids and free tRNA molecules, this enzyme counteracts the toxicity associated with the formation of D-aminoacyl-tRNA entities in vivo and helps enforce protein L-homochirality. This Oenococcus oeni (strain ATCC BAA-331 / PSU-1) protein is D-aminoacyl-tRNA deacylase.